Reading from the N-terminus, the 242-residue chain is 1-(5-phosphoribosyl)-5-[(5-phosphoribosylamino)methylideneamino] imidazole-4-carboxamide isomerase (242 aa).

Aspartate 8 functions as the Proton acceptor in the catalytic mechanism. The active-site Proton donor is aspartate 129.

Belongs to the HisA/HisF family.

It localises to the cytoplasm. The catalysed reaction is 1-(5-phospho-beta-D-ribosyl)-5-[(5-phospho-beta-D-ribosylamino)methylideneamino]imidazole-4-carboxamide = 5-[(5-phospho-1-deoxy-D-ribulos-1-ylimino)methylamino]-1-(5-phospho-beta-D-ribosyl)imidazole-4-carboxamide. It functions in the pathway amino-acid biosynthesis; L-histidine biosynthesis; L-histidine from 5-phospho-alpha-D-ribose 1-diphosphate: step 4/9. The sequence is that of 1-(5-phosphoribosyl)-5-[(5-phosphoribosylamino)methylideneamino] imidazole-4-carboxamide isomerase from Syntrophus aciditrophicus (strain SB).